The chain runs to 287 residues: Inositol-1-monophosphatase (287 aa).

Mg(2+) is bound by residues Glu-79, Asp-96, Leu-98, and Asp-99. Residue Glu-79 coordinates substrate. Residues 98–101 (LDGT), Arg-195, and Asp-224 contribute to the substrate site. Residue Asp-224 coordinates Mg(2+).

This sequence belongs to the inositol monophosphatase superfamily. The cofactor is Mg(2+).

The enzyme catalyses a myo-inositol phosphate + H2O = myo-inositol + phosphate. The chain is Inositol-1-monophosphatase (suhB) from Synechocystis sp. (strain ATCC 27184 / PCC 6803 / Kazusa).